The primary structure comprises 232 residues: Ribonuclease 3 (232 aa).

The 126-residue stretch at 10–135 (ALKIYEATGY…LIGAMYMDGG (126 aa)) folds into the RNase III domain. Glutamate 48 is a binding site for Mg(2+). Aspartate 52 is an active-site residue. Residues asparagine 121 and glutamate 124 each coordinate Mg(2+). Glutamate 124 is a catalytic residue. The DRBM domain maps to 161 to 230 (DPKTALQEWV…AKLMLKKITE (70 aa)).

Belongs to the ribonuclease III family. As to quaternary structure, homodimer. Mg(2+) serves as cofactor.

It is found in the cytoplasm. It carries out the reaction Endonucleolytic cleavage to 5'-phosphomonoester.. Functionally, digests double-stranded RNA. Involved in the processing of primary rRNA transcript to yield the immediate precursors to the large and small rRNAs (23S and 16S). Processes some mRNAs, and tRNAs when they are encoded in the rRNA operon. Processes pre-crRNA and tracrRNA of type II CRISPR loci if present in the organism. The protein is Ribonuclease 3 of Anaplasma marginale (strain St. Maries).